Consider the following 638-residue polypeptide: Guanylate-binding protein 7 (638 aa).

A GTPase domain (Globular) region spans residues 1–310; sequence MASEIHMPGP…DAINSGATPC (310 aa). The GB1/RHD3-type G domain maps to 35–277; that stretch reads TQPVVVVAIV…FCSYIFTHAK (243 aa). GTP is bound by residues 45-52, 67-69, and 97-101; these read GLYRTGKS, LGC, and DTEGL. The tract at residues 311-638 is interaction with the CYBA-CYBB complex; it reads LENAMAVLAQ…LRNPGKKIIS (328 aa). The interval 590–638 is C-terminal tail; required for its localization to cytoplasmic vesicle; sequence PSVFSQILDVAGSIFIAALPGAAKLVDLGMKILSSLCNRLRNPGKKIIS.

This sequence belongs to the TRAFAC class dynamin-like GTPase superfamily. GB1/RHD3 GTPase family. GB1 subfamily. As to quaternary structure, monomer and dimer. Interacts with CYBA, CYBA-CYBB complex and ATG4B. Interacts (via GB1/RHD3-type G domain) with NCF2 and NCF2-NCF4 complex.

The protein resides in the cytoplasmic vesicle membrane. The catalysed reaction is GTP + H2O = GDP + phosphate + H(+). The enzyme catalyses GDP + H2O = GMP + phosphate + H(+). Its function is as follows. Interferon (IFN)-inducible GTPase that plays important roles in innate immunity against a diverse range of bacterial, viral and protozoan pathogens. Hydrolyzes GTP to GMP in two consecutive cleavage reactions and predominantly uses GTP and not GDP or GMP as the substrate. Following infection, recruited to the pathogen-containing vacuoles or vacuole-escaped bacteria and acts as a positive regulator of inflammasome assembly by promoting the release of inflammasome ligands from bacteria. Acts by promoting lysis of pathogen-containing vacuoles, releasing pathogens into the cytosol. Following pathogen release in the cytosol, promotes recruitment of proteins that mediate bacterial cytolysis: this liberates ligands that are detected by inflammasomes, such as lipopolysaccharide (LPS) that activates the non-canonical CASP4/CASP11 inflammasome or double-stranded DNA (dsDNA) that activates the AIM2 inflammasome. Also promotes IFN-gamma-mediated host defense against bacterial infections by regulating oxidative responses and bacteriolytic peptide generation. May help to assemble NADPH oxidase on phagosomal membranes by acting as a bridging protein between NADPH oxidase cytosolic subunits NCF2-NCF4 and the membrane subunits CYBA-CYBB. Participates along with GBP1 in trafficking monoubiquinated protein cargo to autolysosomes for generating ubiquitin-derived antimicrobial peptides. Facilitates influenza A virus replication by inhibiting the activation of NF-kappaB and JAK-STAT signaling pathways and the expression of type I, type III interferons and pro-inflammatory cytokines. Confers protection to several pathogens, including the bacterial pathogens Listeria monocytogenes and Mycobacterium bovis BCG as well as the protozoan pathogen Toxoplasma gondii. Required for disruption of the parasitophorous vacuole formed following T.gondii infection and subsequent killing of the parasite. This is Guanylate-binding protein 7 (GBP7) from Homo sapiens (Human).